The following is a 160-amino-acid chain: 2-C-methyl-D-erythritol 2,4-cyclodiphosphate synthase (160 aa).

2 residues coordinate a divalent metal cation: D11 and H13. Residues 11–13 (DVH) and 37–38 (HS) contribute to the 4-CDP-2-C-methyl-D-erythritol 2-phosphate site. Residue H45 coordinates a divalent metal cation. 4-CDP-2-C-methyl-D-erythritol 2-phosphate contacts are provided by residues 59 to 61 (DIG) and R145.

Belongs to the IspF family. Homotrimer. The cofactor is a divalent metal cation.

It carries out the reaction 4-CDP-2-C-methyl-D-erythritol 2-phosphate = 2-C-methyl-D-erythritol 2,4-cyclic diphosphate + CMP. The protein operates within isoprenoid biosynthesis; isopentenyl diphosphate biosynthesis via DXP pathway; isopentenyl diphosphate from 1-deoxy-D-xylulose 5-phosphate: step 4/6. Its function is as follows. Involved in the biosynthesis of isopentenyl diphosphate (IPP) and dimethylallyl diphosphate (DMAPP), two major building blocks of isoprenoid compounds. Catalyzes the conversion of 4-diphosphocytidyl-2-C-methyl-D-erythritol 2-phosphate (CDP-ME2P) to 2-C-methyl-D-erythritol 2,4-cyclodiphosphate (ME-CPP) with a corresponding release of cytidine 5-monophosphate (CMP). This Neisseria meningitidis serogroup A / serotype 4A (strain DSM 15465 / Z2491) protein is 2-C-methyl-D-erythritol 2,4-cyclodiphosphate synthase.